The chain runs to 667 residues: DNA ligase (667 aa).

Residues 32 to 36 (DKDYD) and 80 to 81 (SL) contribute to the NAD(+) site. The active-site N6-AMP-lysine intermediate is K121. R143, E178, and K314 together coordinate NAD(+). Residues C407, C410, C423, and C429 each contribute to the Zn(2+) site. The BRCT domain occupies 587 to 667 (IVESIFKDKT…EFEKMLGRES (81 aa)).

This sequence belongs to the NAD-dependent DNA ligase family. LigA subfamily. Mg(2+) is required as a cofactor. Mn(2+) serves as cofactor.

It carries out the reaction NAD(+) + (deoxyribonucleotide)n-3'-hydroxyl + 5'-phospho-(deoxyribonucleotide)m = (deoxyribonucleotide)n+m + AMP + beta-nicotinamide D-nucleotide.. Its function is as follows. DNA ligase that catalyzes the formation of phosphodiester linkages between 5'-phosphoryl and 3'-hydroxyl groups in double-stranded DNA using NAD as a coenzyme and as the energy source for the reaction. It is essential for DNA replication and repair of damaged DNA. The sequence is that of DNA ligase from Clostridium botulinum (strain Alaska E43 / Type E3).